The chain runs to 248 residues: Type II restriction enzyme XhoI (248 aa).

This sequence belongs to the XhoI type II restriction endonuclease family.

The catalysed reaction is Endonucleolytic cleavage of DNA to give specific double-stranded fragments with terminal 5'-phosphates.. In terms of biological role, a P subtype restriction enzyme that recognizes the double-stranded sequence 5'-CTCGAG-3' and cleaves after C-1. In Xanthomonas vasicola, this protein is Type II restriction enzyme XhoI.